The chain runs to 427 residues: Tol-Pal system protein TolB (427 aa).

The first 23 residues, 1 to 23 (MKLLKRLVSVFAIVLAVGSNAFA), serve as a signal peptide directing secretion.

The protein belongs to the TolB family. In terms of assembly, the Tol-Pal system is composed of five core proteins: the inner membrane proteins TolA, TolQ and TolR, the periplasmic protein TolB and the outer membrane protein Pal. They form a network linking the inner and outer membranes and the peptidoglycan layer.

Its subcellular location is the periplasm. Its function is as follows. Part of the Tol-Pal system, which plays a role in outer membrane invagination during cell division and is important for maintaining outer membrane integrity. The polypeptide is Tol-Pal system protein TolB (Haemophilus influenzae (strain PittEE)).